Consider the following 187-residue polypeptide: Adenylate kinase (187 aa).

10–15 is a binding site for ATP; that stretch reads GSGKGT. Residues 30–59 form an NMP region; that stretch reads STGDLLRAEVAAGSPLGLKAKEVMARGDLV. Residues Thr-31, Arg-36, 57–59, 85–88, and Gln-92 contribute to the AMP site; these read DLV and GYPR. Residues 126–136 form an LID region; sequence GRAKAEGREDD. Arg-127 is a binding site for ATP. Arg-133 and Arg-144 together coordinate AMP. Gly-172 is a binding site for ATP.

Belongs to the adenylate kinase family. As to quaternary structure, monomer.

The protein resides in the cytoplasm. The enzyme catalyses AMP + ATP = 2 ADP. It functions in the pathway purine metabolism; AMP biosynthesis via salvage pathway; AMP from ADP: step 1/1. Its function is as follows. Catalyzes the reversible transfer of the terminal phosphate group between ATP and AMP. Plays an important role in cellular energy homeostasis and in adenine nucleotide metabolism. The protein is Adenylate kinase of Xanthomonas campestris pv. campestris (strain 8004).